The chain runs to 459 residues: Prenyltransferase penI (459 aa).

L-tryptophan-binding positions include 107–108 (VV) and glutamate 111. Residues arginine 126, arginine 276, lysine 278, tyrosine 280, and tyrosine 384 each contribute to the substrate site.

The protein belongs to the tryptophan dimethylallyltransferase family.

The catalysed reaction is quinolinone B + dimethylallyl diphosphate = peniprequinolone + diphosphate. The protein operates within secondary metabolite biosynthesis. It participates in alkaloid biosynthesis. It functions in the pathway mycotoxin biosynthesis. Its function is as follows. Prenyltransferase; part of the gene cluster that mediates the biosynthesis of penigequinolones, potent insecticidal alkaloids that contain a highly modified 10-carbon prenyl group. The first stage is catalyzed by the nonribosomal peptide synthetase penN that condenses anthranilic acid and O-methyl-L-tyrosine to produce 4'-methoxycyclopeptin. 4'-methoxycyclopeptin is then converted to 4'-methoxydehydrocyclopeptin by the ketoglutarate-dependent dioxygenase penM through dehydrogenation to form a double bond between C-alpha and C-beta of the O-methyltyrosine side chain. PenM also converts its first product methoxydehydrocyclopeptin to 4'-methoxycyclopenin. The following conversion of 4'methoxycyclopenin into 4'-methoxyviridicatin is catalyzed by the cyclopenase penL. 4'-methoxyviridicatin is the precursor of quinolone natural products, and is further converted to quinolinone B. The prenyltransferase penI then catalyzes the canonical Friedel-Crafts alkylation of quinolinone B with dimethylallyl cation to yield dimethylallyl quinolone, which is subjected to FAD-dependent dehydrogenation by the FAD-linked oxidoreductase penH to yield conjugated aryl diene. The delta(3') double bond then serves as the site of the second alkylation with DMAPP catalyzed by the prenyltransferase penG to yield a carbenium ion intermediate, which can be attacked by H(2)O to yield a styrenyl quinolone containing a C3'-hydroxyprenyl chain, or undergo cyclization to yield yaequinolones J1 and J2. The conversion of the styrenyl quinolone into the tetrahydrofuran-containing yaequinolone C is performed by the FAD-dependent monooxygenase penE and involves epoxidation of the terminal C7'-C8' olefin, followed by epoxide ring opening initiated by the C3' hydroxyl group. The predicted cysteine hydrolase penJ acts as an epoxide hydrolase that enhances the rate of the 5-exo-tet cyclization step, increasing the yield of yaequinolone C. PenF catalyzes the cationic rearrangement of the epoxide formed by penE (before ring opening to produce yaequinolone C) into yaequinolone D. Finally, the short-chain dehydrogenase/reductase (SDR)-like reductase penD, catalyzes both the dehydration of yaequinolone D and the reduction of the resulting oxonium to yield penigequinolone. The polypeptide is Prenyltransferase penI (Penicillium thymicola).